Reading from the N-terminus, the 1364-residue chain is Collagen alpha-2(I) chain (1364 aa).

Positions 1-22 (MLSFVDTRTLLLLAVTSCLATC) are cleaved as a signal peptide. At Gln23 the chain carries Pyrrolidone carboxylic acid. Positions 23–79 (QSLQEATARKGPSGDRGPRGERGPPGPPGRDGDDGIPGPPGPPGPPGPPGLGGNFAA) are cleaved as a propeptide — N-terminal propeptide. The interval 26–1128 (QEATARKGPS…QPRSPTSLRP (1103 aa)) is disordered. Residues 34–44 (PSGDRGPRGER) show a composition bias toward basic and acidic residues. Residues 59-71 (PGPPGPPGPPGPP) are compositionally biased toward pro residues. Position 80 is a pyrrolidone carboxylic acid (Gln80). Lys84 carries the allysine modification. The span at 93–130 (LMGPRGPPGASGAPGPQGFQGPPGEPGEPGQTGPAGAR) shows a compositional bias: low complexity. Residues Pro100, Pro106, Pro115, Pro118, Pro121, Pro133, Pro136, Pro145, Pro151, Pro166, Pro169, and Pro172 each carry the 4-hydroxyproline modification. Residues 139–153 (AGEDGHPGKPGRPGE) show a composition bias toward basic and acidic residues. Position 175 is a 5-hydroxylysine; alternate (Lys175). An O-linked (Gal...) hydroxylysine; alternate glycan is attached at Lys175. 2 positions are modified to 4-hydroxyproline: Pro190 and Pro193. The residue at position 196 (Lys196) is a 5-hydroxylysine. 4-hydroxyproline occurs at positions 199, 202, 208, 217, 226, 253, 256, and 259. The segment covering 223-252 (VGAPGPAGARGSDGSVGPVGPAGPIGSAGP) has biased composition (low complexity). Lys262 carries the post-translational modification 5-hydroxylysine. 4-hydroxyproline is present on residues Pro271, Pro286, Pro295, and Pro304. Low complexity predominate over residues 277–291 (AGPRGEVGLPGLSGP). Over residues 298-319 (PGANGLPGAKGAAGLPGVAGAP) the composition is skewed to low complexity. Position 307 is a 5-hydroxylysine (Lys307). 5 positions are modified to 4-hydroxyproline: Pro313, Pro319, Pro322, Pro328, and Pro346. Positions 328 to 343 (PGPVGAAGATGARGLV) are enriched in low complexity. A 5-hydroxylysine modification is found at Lys352. A 4-hydroxyproline mark is found at Pro361, Pro367, Pro370, Pro391, Pro394, Pro400, Pro406, Pro439, and Pro442. The span at 396-406 (LRGNPGSRGLP) shows a compositional bias: low complexity. 2 stretches are compositionally biased toward low complexity: residues 468–487 (LPGI…RGEP) and 511–535 (AGLA…PGLQ). A compositionally biased stretch (gly residues) spans 536 to 545 (GVQGGKGEQG). Composition is skewed to low complexity over residues 592–609 (PGES…SRGP), 621–643 (EPGV…PGER), 666–688 (SPGR…AGAN), and 715–735 (VGPA…QPGA). The segment covering 736 to 745 (KGERGTKGPK) has biased composition (basic and acidic residues). Over residues 748-763 (NGPVGPTGPVGAAGPS) the composition is skewed to low complexity. Over residues 773 to 782 (GSRGDGGPPG) the composition is skewed to gly residues. Composition is skewed to low complexity over residues 783–793 (ATGFPGAAGRT), 861–874 (PQGL…LGLP), 891–930 (EPGP…NPGN), 948–961 (YPGN…AGAP), and 978–999 (EPGP…PSGP). A compositionally biased stretch (basic and acidic residues) spans 1003–1014 (RGDKGEPGDKGP). Residues 1087–1101 (AGPPGPPGPPGPPGP) are compositionally biased toward pro residues. A propeptide spans 1118-1364 (DQPRSPTSLR…RLNIGPVCFK (247 aa)) (C-terminal propeptide). The 234-residue stretch at 1131 to 1364 (YEVDATLKSL…RLNIGPVCFK (234 aa)) folds into the Fibrillar collagen NC1 domain. 3 cysteine pairs are disulfide-bonded: Cys1161–Cys1193, Cys1201–Cys1362, and Cys1270–Cys1315. 5 residues coordinate Ca(2+): Asp1179, Asn1181, Gln1182, Cys1184, and Asp1187. A glycan (N-linked (GlcNAc...) asparagine) is linked at Asn1265.

This sequence belongs to the fibrillar collagen family. As to quaternary structure, trimers of one alpha 2(I) and two alpha 1(I) chains. Interacts (via C-terminus) with TMEM131 (via PapD-L domain); the interaction is direct and is involved in assembly and TRAPPIII ER-to-Golgi transport complex-dependent secretion of collagen. Post-translationally, prolines at the third position of the tripeptide repeating unit (G-X-Y) are hydroxylated in some or all of the chains. In terms of tissue distribution, forms the fibrils of tendon, ligaments and bones. In bones the fibrils are mineralized with calcium hydroxyapatite.

The protein resides in the secreted. It is found in the extracellular space. It localises to the extracellular matrix. Functionally, type I collagen is a member of group I collagen (fibrillar forming collagen). This chain is Collagen alpha-2(I) chain (COL1A2), found in Bos taurus (Bovine).